The sequence spans 465 residues: Solute carrier family 7 member 12 (465 aa).

At Met1–Ala6 the chain is on the cytoplasmic side. A helical membrane pass occupies residues Leu7 to Val27. Topologically, residues Thr28–Asn39 are extracellular. Residues Ile40 to Cys60 traverse the membrane as a helical segment. The Cytoplasmic portion of the chain corresponds to Asn61–Thr81. The helical transmembrane segment at Leu82 to Ile102 threads the bilayer. The Extracellular portion of the chain corresponds to Gly103 to Ala132. A helical membrane pass occupies residues Leu133 to Phe153. A topological domain (cytoplasmic) is located at residue Asn154. A helical membrane pass occupies residues Thr155–Val175. Over Asn176–Ala202 the chain is Extracellular. Residues Ile203 to Ile223 form a helical membrane-spanning segment. At Lys224–Leu234 the chain is on the cytoplasmic side. The chain crosses the membrane as a helical span at residues Ile235 to Val255. Residues Leu256–Gln280 lie on the Extracellular side of the membrane. The helical transmembrane segment at Trp281–Ser301 threads the bilayer. Over Ala302 to Ser327 the chain is Cytoplasmic. The chain crosses the membrane as a helical span at residues Pro328–Leu351. Residues Val352–Ser356 lie on the Extracellular side of the membrane. Residues Leu357–Tyr375 form a helical membrane-spanning segment. The Cytoplasmic segment spans residues Gln376 to Val386. Residues Trp387–Ile407 form a helical membrane-spanning segment. Topologically, residues Gln408–Ser409 are extracellular. The helical transmembrane segment at Pro410–Leu430 threads the bilayer. Topologically, residues Gln431 to Asn465 are cytoplasmic.

This sequence belongs to the amino acid-polyamine-organocation (APC) superfamily. Probably forms multimers, perhaps with an unknown protein(s). Expressed in kidney and red blood cells (at protein level). Expressed in kidney along the collecting ducts in the cortex, outer and inner medulla. May be expressed in placenta, lungs, spleen and skeletal muscles.

The protein localises to the apical cell membrane. Its subcellular location is the basal cell membrane. It localises to the cytoplasm. Its function is as follows. Probably mediates sodium- and chloride-independent uptake of neutral amino acids. The sequence is that of Solute carrier family 7 member 12 from Mus musculus (Mouse).